We begin with the raw amino-acid sequence, 267 residues long: Tryptophan synthase alpha chain (267 aa).

Residues Glu43 and Asp54 each act as proton acceptor in the active site.

The protein belongs to the TrpA family. In terms of assembly, tetramer of two alpha and two beta chains.

It catalyses the reaction (1S,2R)-1-C-(indol-3-yl)glycerol 3-phosphate + L-serine = D-glyceraldehyde 3-phosphate + L-tryptophan + H2O. The protein operates within amino-acid biosynthesis; L-tryptophan biosynthesis; L-tryptophan from chorismate: step 5/5. Its function is as follows. The alpha subunit is responsible for the aldol cleavage of indoleglycerol phosphate to indole and glyceraldehyde 3-phosphate. The protein is Tryptophan synthase alpha chain of Bacillus licheniformis (strain ATCC 14580 / DSM 13 / JCM 2505 / CCUG 7422 / NBRC 12200 / NCIMB 9375 / NCTC 10341 / NRRL NRS-1264 / Gibson 46).